Consider the following 354-residue polypeptide: GTPase Obg (354 aa).

One can recognise an Obg domain in the interval 1-159 (MQFIDHAEIE…KQLRLELKLL (159 aa)). One can recognise an OBG-type G domain in the interval 160–328 (AEVGIIGLPN…LLQEIWDVLD (169 aa)). GTP contacts are provided by residues 166-173 (GLPNAGKS), 191-195 (FTTLI), 213-216 (DIPG), 280-283 (NKLD), and 309-311 (SAV). Residues Ser173 and Thr193 each contribute to the Mg(2+) site.

It belongs to the TRAFAC class OBG-HflX-like GTPase superfamily. OBG GTPase family. In terms of assembly, monomer. Requires Mg(2+) as cofactor.

It is found in the cytoplasm. An essential GTPase which binds GTP, GDP and possibly (p)ppGpp with moderate affinity, with high nucleotide exchange rates and a fairly low GTP hydrolysis rate. Plays a role in control of the cell cycle, stress response, ribosome biogenesis and in those bacteria that undergo differentiation, in morphogenesis control. This Picosynechococcus sp. (strain ATCC 27264 / PCC 7002 / PR-6) (Agmenellum quadruplicatum) protein is GTPase Obg.